A 295-amino-acid chain; its full sequence is Alpha-soluble NSF attachment protein (295 aa).

Met-1 is modified (N-acetylmethionine). A phosphoserine mark is found at Ser-26, Ser-29, and Ser-195.

Belongs to the SNAP family. In terms of assembly, interacts with PRKCABP, and disrupts the interaction between GRIA2 and PRKCABP, leading to the internalization of GRIA2. Found in a complex with VAMP8. Component of a SNARE-like complex that contains at least ZW10, USE1L, RINT1, STX18 and NAPA/SNAP-alpha. Interacts with VTI1A. Interacts with STX12. Interacts with GNA12 (via N-terminus); the interaction promotes CDH5 localization to plasma membrane.

Its subcellular location is the cell membrane. Functionally, required for vesicular transport between the endoplasmic reticulum and the Golgi apparatus. Together with GNA12 promotes CDH5 localization to plasma membrane. This is Alpha-soluble NSF attachment protein (Napa) from Mus musculus (Mouse).